The sequence spans 710 residues: Methionine--tRNA ligase (710 aa).

The 'HIGH' region signature appears at 16–26 (PYANGAFHIGH). The Zn(2+) site is built by Cys147, Cys150, Cys160, and Cys163. The 'KMSKS' region motif lies at 350–354 (KMSKS). Lys353 serves as a coordination point for ATP. The tRNA-binding domain maps to 604–710 (DFAKIDLRIA…PGAEPGMRVG (107 aa)).

The protein belongs to the class-I aminoacyl-tRNA synthetase family. MetG type 1 subfamily. Homodimer. Requires Zn(2+) as cofactor.

The protein localises to the cytoplasm. It catalyses the reaction tRNA(Met) + L-methionine + ATP = L-methionyl-tRNA(Met) + AMP + diphosphate. Is required not only for elongation of protein synthesis but also for the initiation of all mRNA translation through initiator tRNA(fMet) aminoacylation. This Herminiimonas arsenicoxydans protein is Methionine--tRNA ligase.